The following is a 187-amino-acid chain: MSENYTPRLKTRYREEIRTKLNDEFSYENVMQIPGVVKVVVNMGVGDAARDSKLINGALEDLTLITGQKPELRRAKKSIANFKLREGMPIGARVTLRGDRMWEFLDRLLTVALPRIRDFRGLSDQQFDGHGNYTFGLSEQTMFYEIDVDKIDRPRGMDITVVTTATNNEEGRALLRELGFPFKKADA.

This sequence belongs to the universal ribosomal protein uL5 family. Part of the 50S ribosomal subunit; part of the 5S rRNA/L5/L18/L25 subcomplex. Contacts the 5S rRNA and the P site tRNA. Forms a bridge to the 30S subunit in the 70S ribosome.

Its function is as follows. This is one of the proteins that bind and probably mediate the attachment of the 5S RNA into the large ribosomal subunit, where it forms part of the central protuberance. In the 70S ribosome it contacts protein S13 of the 30S subunit (bridge B1b), connecting the 2 subunits; this bridge is implicated in subunit movement. Contacts the P site tRNA; the 5S rRNA and some of its associated proteins might help stabilize positioning of ribosome-bound tRNAs. This is Large ribosomal subunit protein uL5 from Corynebacterium diphtheriae (strain ATCC 700971 / NCTC 13129 / Biotype gravis).